The primary structure comprises 96 residues: Small ribosomal subunit protein bS6 (96 aa).

It belongs to the bacterial ribosomal protein bS6 family.

Its function is as follows. Binds together with bS18 to 16S ribosomal RNA. The polypeptide is Small ribosomal subunit protein bS6 (Heliobacterium modesticaldum (strain ATCC 51547 / Ice1)).